Consider the following 298-residue polypeptide: Ectoine dioxygenase (298 aa).

Residues 1–18 (MLQQAIDRDPVDRIDRYP) are compositionally biased toward basic and acidic residues. Positions 1–26 (MLQQAIDRDPVDRIDRYPTRTAEPAP) are disordered. Residue glutamine 133 coordinates L-ectoine. Fe cation-binding residues include histidine 150, aspartate 152, and histidine 251.

It belongs to the PhyH family. EctD subfamily. As to quaternary structure, homodimer. Fe(2+) is required as a cofactor.

The enzyme catalyses L-ectoine + 2-oxoglutarate + O2 = 5-hydroxyectoine + succinate + CO2. Functionally, involved in the biosynthesis of 5-hydroxyectoine, called compatible solute, which helps organisms to survive extreme osmotic stress by acting as a highly soluble organic osmolyte. Catalyzes the 2-oxoglutarate-dependent selective hydroxylation of L-ectoine to yield (4S,5S)-5-hydroxyectoine. This Nocardia farcinica (strain IFM 10152) protein is Ectoine dioxygenase.